Reading from the N-terminus, the 1165-residue chain is Valine--tRNA ligase (1165 aa).

The short motif at 43-53 is the 'HIGH' region element; sequence PNVTGSLHMGH. The 'KMSKS' region signature appears at 800–804; that stretch reads KMSKT. K803 contacts ATP. Coiled-coil stretches lie at residues 1001 to 1032 and 1097 to 1165; these read KNEDEIYEEDKQKVERLKEIISAIRAIRSDLQ and HVDL…VLRS.

The protein belongs to the class-I aminoacyl-tRNA synthetase family. ValS type 1 subfamily. Monomer.

Its subcellular location is the cytoplasm. The catalysed reaction is tRNA(Val) + L-valine + ATP = L-valyl-tRNA(Val) + AMP + diphosphate. Its function is as follows. Catalyzes the attachment of valine to tRNA(Val). As ValRS can inadvertently accommodate and process structurally similar amino acids such as threonine, to avoid such errors, it has a 'posttransfer' editing activity that hydrolyzes mischarged Thr-tRNA(Val) in a tRNA-dependent manner. This chain is Valine--tRNA ligase, found in Aquifex aeolicus (strain VF5).